The following is a 188-amino-acid chain: Acireductone dioxygenase 1 (188 aa).

His90, His92, Glu96, and His135 together coordinate Fe(2+). Residues His90, His92, Glu96, and His135 each contribute to the Ni(2+) site.

It belongs to the acireductone dioxygenase (ARD) family. Fe(2+) serves as cofactor. Requires Ni(2+) as cofactor.

Its subcellular location is the cytoplasm. It is found in the nucleus. The enzyme catalyses 1,2-dihydroxy-5-(methylsulfanyl)pent-1-en-3-one + O2 = 4-methylsulfanyl-2-oxobutanoate + formate + 2 H(+). It catalyses the reaction 1,2-dihydroxy-5-(methylsulfanyl)pent-1-en-3-one + O2 = 3-(methylsulfanyl)propanoate + CO + formate + 2 H(+). Its pathway is amino-acid biosynthesis; L-methionine biosynthesis via salvage pathway; L-methionine from S-methyl-5-thio-alpha-D-ribose 1-phosphate: step 5/6. Catalyzes 2 different reactions between oxygen and the acireductone 1,2-dihydroxy-3-keto-5-methylthiopentene (DHK-MTPene) depending upon the metal bound in the active site. Fe-containing acireductone dioxygenase (Fe-ARD) produces formate and 2-keto-4-methylthiobutyrate (KMTB), the alpha-ketoacid precursor of methionine in the methionine recycle pathway. Ni-containing acireductone dioxygenase (Ni-ARD) produces methylthiopropionate, carbon monoxide and formate, and does not lie on the methionine recycle pathway. The chain is Acireductone dioxygenase 1 from Vitis vinifera (Grape).